The following is a 503-amino-acid chain: Na(+)-translocating NADH-quinone reductase subunit B (503 aa).

5 helical membrane passes run 55 to 75 (MMLVVIALFPATFVAIWNSGL), 94 to 114 (ISGFGSYLSFVYKEIHIVPIL), 120 to 140 (IFIPLLTISYVVGGTCEVLFA), 161 to 181 (TLPPTIPYWMAALGIAFGIVV), and 186 to 206 (FGGTGMNILNPALSGRAFLFF). Thr248 carries the FMN phosphoryl threonine modification. Helical transmembrane passes span 361–381 (TSTFACLLGAIFLIVTGIASW), 386–406 (AFGIGAFLTGWLFKFISVLIV), 417–437 (FFIPAYRQLFLGGLAFGLVFM), 452–472 (WIYGFFIGFMTIVIRLINPAY), and 475–495 (GVMLAILLGNVFAPLIDYFAV).

The protein belongs to the NqrB/RnfD family. In terms of assembly, composed of six subunits; NqrA, NqrB, NqrC, NqrD, NqrE and NqrF. The cofactor is FMN.

The protein localises to the cell inner membrane. It carries out the reaction a ubiquinone + n Na(+)(in) + NADH + H(+) = a ubiquinol + n Na(+)(out) + NAD(+). In terms of biological role, NQR complex catalyzes the reduction of ubiquinone-1 to ubiquinol by two successive reactions, coupled with the transport of Na(+) ions from the cytoplasm to the periplasm. NqrA to NqrE are probably involved in the second step, the conversion of ubisemiquinone to ubiquinol. This chain is Na(+)-translocating NADH-quinone reductase subunit B, found in Chlamydia pneumoniae (Chlamydophila pneumoniae).